The sequence spans 164 residues: Probable metalloprotease y4qB (164 aa).

The region spanning 5-142 (IWIPESVVEA…WLPHAWIGQL (138 aa)) is the MPN domain. Residues H89, H91, and D103 each contribute to the Zn(2+) site.

Belongs to the peptidase M67B family.

The chain is Probable metalloprotease y4qB from Sinorhizobium fredii (strain NBRC 101917 / NGR234).